Here is a 305-residue protein sequence, read N- to C-terminus: Tyrosine recombinase XerC (305 aa).

Positions 2 to 88 constitute a Core-binding (CB) domain; the sequence is NQLELYIDTF…TLRSFYRFLE (87 aa). The Tyr recombinase domain occupies 109–294; that stretch reads PVPGFLYQEE…TKDHLREAYM (186 aa). Residues R149, K173, H246, R249, and H272 contribute to the active site. Y281 acts as the O-(3'-phospho-DNA)-tyrosine intermediate in catalysis.

Belongs to the 'phage' integrase family. XerC subfamily. As to quaternary structure, forms a cyclic heterotetrameric complex composed of two molecules of XerC and two molecules of XerD.

The protein resides in the cytoplasm. Site-specific tyrosine recombinase, which acts by catalyzing the cutting and rejoining of the recombining DNA molecules. The XerC-XerD complex is essential to convert dimers of the bacterial chromosome into monomers to permit their segregation at cell division. It also contributes to the segregational stability of plasmids. The protein is Tyrosine recombinase XerC of Oceanobacillus iheyensis (strain DSM 14371 / CIP 107618 / JCM 11309 / KCTC 3954 / HTE831).